The primary structure comprises 189 residues: Interferon alpha-6 (189 aa).

The signal sequence occupies residues 1 to 23 (MARLCAFLMVLAVLSYWPTCSLG). 2 disulfide bridges follow: Cys-24–Cys-122 and Cys-52–Cys-162. A glycan (N-linked (GlcNAc...) asparagine) is linked at Asn-101.

It belongs to the alpha/beta interferon family.

It localises to the secreted. Functionally, produced by macrophages, IFN-alpha have antiviral activities. Interferon stimulates the production of two enzymes: a protein kinase and an oligoadenylate synthetase. The polypeptide is Interferon alpha-6 (Ifna6) (Mus musculus (Mouse)).